A 396-amino-acid chain; its full sequence is Acetate kinase (396 aa).

N7 serves as a coordination point for Mg(2+). ATP is bound at residue K14. R91 provides a ligand contact to substrate. D148 acts as the Proton donor/acceptor in catalysis. ATP contacts are provided by residues 208 to 212, 283 to 285, and 331 to 335; these read HLGNG, DFR, and GIGEN. E384 lines the Mg(2+) pocket.

The protein belongs to the acetokinase family. In terms of assembly, homodimer. Mg(2+) is required as a cofactor. The cofactor is Mn(2+).

The protein localises to the cytoplasm. It carries out the reaction acetate + ATP = acetyl phosphate + ADP. Its pathway is metabolic intermediate biosynthesis; acetyl-CoA biosynthesis; acetyl-CoA from acetate: step 1/2. In terms of biological role, catalyzes the formation of acetyl phosphate from acetate and ATP. Can also catalyze the reverse reaction. This Desulforamulus reducens (strain ATCC BAA-1160 / DSM 100696 / MI-1) (Desulfotomaculum reducens) protein is Acetate kinase.